We begin with the raw amino-acid sequence, 351 residues long: UDP-3-O-acylglucosamine N-acyltransferase (351 aa).

The active-site Proton acceptor is His257.

It belongs to the transferase hexapeptide repeat family. LpxD subfamily. In terms of assembly, homotrimer.

The enzyme catalyses a UDP-3-O-[(3R)-3-hydroxyacyl]-alpha-D-glucosamine + a (3R)-hydroxyacyl-[ACP] = a UDP-2-N,3-O-bis[(3R)-3-hydroxyacyl]-alpha-D-glucosamine + holo-[ACP] + H(+). Its pathway is bacterial outer membrane biogenesis; LPS lipid A biosynthesis. Functionally, catalyzes the N-acylation of UDP-3-O-acylglucosamine using 3-hydroxyacyl-ACP as the acyl donor. Is involved in the biosynthesis of lipid A, a phosphorylated glycolipid that anchors the lipopolysaccharide to the outer membrane of the cell. The protein is UDP-3-O-acylglucosamine N-acyltransferase of Brucella abortus (strain S19).